A 977-amino-acid chain; its full sequence is Serine/threonine-protein kinase/endoribonuclease IRE1 (977 aa).

A signal peptide spans 1-20 (MPARWLLLLLALLLPPPGPG). Over 21-445 (SFGRTSTVTL…EAPVDSMLKD (425 aa)) the chain is Lumenal. An N-linked (GlcNAc...) asparagine glycan is attached at Asn178. A helical transmembrane segment spans residues 446–466 (MATIILSTFLLVGWVAFIITY). Over 467 to 977 (PLSVHQQRQL…PQPPVIPYAL (511 aa)) the chain is Cytoplasmic. Residues 498–559 (FHPHGDLTQD…PSLEQDDEDE (62 aa)) form a disordered region. Over residues 513-551 (SSGPFSESSGTSSPSPSPRASNHSLHPSSSASRAGTSPS) the composition is skewed to low complexity. The region spanning 571 to 832 (FCPKDVLGHG…AKHVLKHPFF (262 aa)) is the Protein kinase domain. ATP is bound by residues 577-585 (LGHGAEGTI), Lys599, and 643-645 (ELC). Catalysis depends on Asp688, which acts as the Proton acceptor; for protein kinase activity. ATP is bound by residues 690 to 693 (KPHN) and Asp711. Residues Ser724 and Ser729 each carry the phosphoserine modification. The region spanning 835–963 (LEKQLQFFQD…ERLFQTYYWH (129 aa)) is the KEN domain. The interacts with hydroxy-aryl-aldehyde inhibitors stretch occupies residues 906 to 907 (NK).

Belongs to the protein kinase superfamily. Ser/Thr protein kinase family. In terms of assembly, monomer. Homodimer; disulfide-linked; homodimerization takes place in response to endoplasmic reticulum stress and promotes activation of the kinase and endoribonuclease activities. Dimer formation is driven by hydrophobic interactions within the N-terminal luminal domains and stabilized by disulfide bridges. Interacts (via the luminal region) with DNAJB9/ERdj4; interaction takes place in unstressed cells and promotes recruitment of HSPA5/BiP. Interacts (via the luminal region) with HSPA5/BiP; HSPA5/BiP is a negative regulator of the unfolded protein response (UPR) that prevents homodimerization of ERN1/IRE1 and subsequent activation of the protein. Interaction with HSPA5 also competitively inhibits ERN1 interaction with MANF. Interacts with PDIA6, a negative regulator of the UPR; the interaction is direct and disrupts homodimerization. Interacts with DAB2IP (via PH domain); the interaction occurs in a endoplasmic reticulum stress-induced dependent manner and is required for subsequent recruitment of TRAF2 to ERN1/IRE1. Interacts with TAOK3 and TRAF2. Interacts with RNF13. Interacts with LACC1. Interacts (when unphosphorylated) with DDRGK1; interaction is dependent on UFM1 and takes place in response to endoplasmic reticulum stress, regulating ERN1/IRE1-alpha stability. Interacts (via N-terminus) with P4HB/PDIA1; the interaction is enhanced by phosphorylation of P4HB by FAM20C in response to endoplasmic reticulum stress and results in attenuation of ERN1 activity. Interacts with TMBIM6; this interaction inhibits ERN1 activity. Interacts (via luminal domain) with MANF (via C-terminus); the interaction is decreased in the presence of increasing concentrations of Ca(2+). Mg(2+) serves as cofactor. Post-translationally, autophosphorylated following homodimerization. Autophosphorylation promotes activation of the endoribonuclease domain. In response to ER stress, phosphorylated at Ser-724, Ser-729 and possibly Ser-726; phosphorylation promotes oligomerization and endoribonuclease activity. Dephosphorylated at Ser-724, Ser-729 and possibly Ser-726 by RPAP2 to abort failed ER-stress adaptation and trigger apoptosis. Phosphorylated at Ser-724; in response to the ER stressor tunicamycin. ADP-ribosylated by PARP16 upon ER stress, which increases both kinase and endonuclease activities. In terms of tissue distribution, expressed in liver (at protein level). Ubiquitously expressed. High levels in thymus, liver and lung. In the brain, preferentially expressed in cortical, hippocampal and olfactory neurons.

It is found in the endoplasmic reticulum membrane. The enzyme catalyses L-seryl-[protein] + ATP = O-phospho-L-seryl-[protein] + ADP + H(+). The catalysed reaction is L-threonyl-[protein] + ATP = O-phospho-L-threonyl-[protein] + ADP + H(+). With respect to regulation, the kinase domain is activated by trans-autophosphorylation following homodimerization. Kinase activity is required for activation of the endoribonuclease domain. Endoribonuclease activity is specifically inhibited by hydroxy-aryl-aldehydes (HAA) MKC9989, OICR464 and OICR573. Its function is as follows. Serine/threonine-protein kinase and endoribonuclease that acts as a key sensor for the endoplasmic reticulum unfolded protein response (UPR). In unstressed cells, the endoplasmic reticulum luminal domain is maintained in its inactive monomeric state by binding to the endoplasmic reticulum chaperone HSPA5/BiP. Accumulation of misfolded protein in the endoplasmic reticulum causes release of HSPA5/BiP, allowing the luminal domain to homodimerize, promoting autophosphorylation of the kinase domain and subsequent activation of the endoribonuclease activity. The endoribonuclease activity is specific for XBP1 mRNA and excises 26 nucleotides from XBP1 mRNA. The resulting spliced transcript of XBP1 encodes a transcriptional activator protein that up-regulates expression of UPR target genes. Acts as an upstream signal for ER stress-induced GORASP2-mediated unconventional (ER/Golgi-independent) trafficking of CFTR to cell membrane by modulating the expression and localization of SEC16A. This chain is Serine/threonine-protein kinase/endoribonuclease IRE1, found in Mus musculus (Mouse).